The primary structure comprises 256 residues: ATP synthase subunit a (256 aa).

Residues 1-8 constitute a propeptide, removed in mature form; the sequence is MYQFNFIL. 7 consecutive transmembrane segments (helical) span residues 34–54, 92–112, 121–141, 148–168, 186–206, 209–229, and 230–250; these read ITNI…YHLL, YFPF…IGMV, HFIL…FLGL, FFSL…LVLI, ANIL…YNIM, GILF…FSGL, and ELAI…SYIK.

The protein belongs to the ATPase A chain family. F-type ATPases have 2 components, CF(1) - the catalytic core - and CF(0) - the membrane proton channel. CF(1) has five subunits: alpha(3), beta(3), gamma(1), delta(1), epsilon(1). CF(0) has three main subunits: a, b and c.

The protein resides in the mitochondrion inner membrane. Its function is as follows. Mitochondrial membrane ATP synthase (F(1)F(0) ATP synthase or Complex V) produces ATP from ADP in the presence of a proton gradient across the membrane which is generated by electron transport complexes of the respiratory chain. F-type ATPases consist of two structural domains, F(1) - containing the extramembraneous catalytic core and F(0) - containing the membrane proton channel, linked together by a central stalk and a peripheral stalk. During catalysis, ATP synthesis in the catalytic domain of F(1) is coupled via a rotary mechanism of the central stalk subunits to proton translocation. Key component of the proton channel; it may play a direct role in the translocation of protons across the membrane. This chain is ATP synthase subunit a (atp6), found in Emericella nidulans (Aspergillus nidulans).